Reading from the N-terminus, the 288-residue chain is MNSKRHLGHTARKRFGQNFLHDDNVIQGIVAAIYPQKGQFLVEIGPGLGALTEPVADQTDRLTVVELDRDLAQRLRHHPFLHQKLNVIETDAMQFDFGKLYEDEHLAEQGQKLRVFGNLPYNISTPLIFHLLKFYDKIQDMHFMLQKEVVKRLCAAPNSKAYGRLTIMTQYFCQVMPVLEVPPTAFKPAPKVDSAVVRLIPHKELPHPVKDLYWLNRVTSQAFNQRRKTLRNALSTLFTPEQLTALNIDLTARAENLSIADYARLANWLADNPPADVRRDEIIEENEE.

Positions 18, 20, 45, 66, 91, and 118 each coordinate S-adenosyl-L-methionine.

Belongs to the class I-like SAM-binding methyltransferase superfamily. rRNA adenine N(6)-methyltransferase family. RsmA subfamily.

Its subcellular location is the cytoplasm. It catalyses the reaction adenosine(1518)/adenosine(1519) in 16S rRNA + 4 S-adenosyl-L-methionine = N(6)-dimethyladenosine(1518)/N(6)-dimethyladenosine(1519) in 16S rRNA + 4 S-adenosyl-L-homocysteine + 4 H(+). In terms of biological role, specifically dimethylates two adjacent adenosines (A1518 and A1519) in the loop of a conserved hairpin near the 3'-end of 16S rRNA in the 30S particle. May play a critical role in biogenesis of 30S subunits. The sequence is that of Ribosomal RNA small subunit methyltransferase A from Mannheimia succiniciproducens (strain KCTC 0769BP / MBEL55E).